The primary structure comprises 778 residues: Ribosome biogenesis protein BOP1 homolog (778 aa).

Residues 1–10 (MAKKQDRKRK) show a composition bias toward basic residues. The tract at residues 1–152 (MAKKQDRKRK…DSDTSDEEDI (152 aa)) is disordered. Composition is skewed to acidic residues over residues 44-53 (EDSTDDEGID), 60-72 (SSED…DEEG), and 84-105 (SSDE…DEEE). Residues 114–124 (TTSSKAETNNE) show a composition bias toward polar residues. The span at 142–151 (EDSDTSDEED) shows a compositional bias: acidic residues. WD repeat units follow at residues 438–479 (GHTD…RTIE), 481–519 (EDVV…KLLI), 564–606 (NHFK…SQIP), 609–647 (KSKG…LIKK), 650–689 (TNSK…KPYQ), 693–732 (LHRN…DLLQ), and 748–778 (RDDF…RLYT).

Belongs to the WD repeat BOP1/ERB1 family.

The protein resides in the nucleus. It is found in the nucleolus. The protein localises to the nucleoplasm. Functionally, required for maturation of ribosomal RNAs and formation of the large ribosomal subunit. This Drosophila willistoni (Fruit fly) protein is Ribosome biogenesis protein BOP1 homolog.